A 132-amino-acid polypeptide reads, in one-letter code: Small ribosomal subunit protein uS8 (132 aa).

The protein belongs to the universal ribosomal protein uS8 family. In terms of assembly, part of the 30S ribosomal subunit. Contacts proteins S5 and S12.

In terms of biological role, one of the primary rRNA binding proteins, it binds directly to 16S rRNA central domain where it helps coordinate assembly of the platform of the 30S subunit. The protein is Small ribosomal subunit protein uS8 of Borrelia duttonii (strain Ly).